Reading from the N-terminus, the 1200-residue chain is Chromosome partition protein Smc (1200 aa).

An ATP-binding site is contributed by 33 to 40 (PNGSGKSN). The segment at 90-109 (GENLSEPGANHNGNGNGAKI) is disordered. Positions 202–528 (EVQDREERCQ…AASQAQQEVQ (327 aa)) form a coiled coil. The region spanning 542 to 656 (PGVCGLVAQL…VFDTLVNARN (115 aa)) is the SMC hinge domain. The stretch at 692–1046 (TMVSEDTAEV…ERTELLLRIE (355 aa)) forms a coiled coil.

It belongs to the SMC family. Homodimer.

The protein localises to the cytoplasm. In terms of biological role, required for chromosome condensation and partitioning. In Synechocystis sp. (strain ATCC 27184 / PCC 6803 / Kazusa), this protein is Chromosome partition protein Smc.